Consider the following 717-residue polypeptide: Ubinuclein-2 (717 aa).

Disordered regions lie at residues 114 to 136 (KDGS…TEDS), 166 to 308 (LERI…SAKS), and 620 to 717 (ADSS…NLPS). Over residues 118-136 (DGEELDGAPDDDDYDTEDS) the composition is skewed to acidic residues. Polar residues-rich tracts occupy residues 214–246 (QSAS…NGND) and 285–308 (SSKS…SAKS). Positions 623-632 (SFERSKQQHE) are enriched in basic and acidic residues. Residues 634–641 (LKRTSSLS) carry the Nuclear localization signal motif. The segment covering 653-665 (KTEPALEETHLPA) has biased composition (basic and acidic residues). A compositionally biased stretch (basic residues) spans 675–705 (RQTHLKSKTHKQVQVHPQSKAHKQAQVHPKA). Positions 706-717 (KTQTPPDLNLPS) are enriched in polar residues.

Belongs to the ubinuclein family. In terms of assembly, component of the HIRA complex made of UBN1, UBN2, ASF1A, CABIN1 and HIRA. Interacts with HIRA.

The protein localises to the nucleus. It localises to the nucleolus. May be required for replication-independent chromatin assembly. The protein is Ubinuclein-2 of Arabidopsis thaliana (Mouse-ear cress).